The sequence spans 60 residues: Defensin MGD-1 (60 aa).

Disulfide bonds link Cys4-Cys25, Cys10-Cys33, Cys14-Cys35, and Cys21-Cys38. At Trp28 the chain carries 3-hydroxytryptophan. Cys38 carries the cysteine amide modification. Residues 39 to 60 (GGRREDVEDIFDIFDNEAADRF) constitute a propeptide that is removed on maturation.

It belongs to the invertebrate defensin family. Type 2 subfamily. In terms of processing, the hydroxylation of the Trp-28 is not important for the antibacterial activity. In terms of tissue distribution, abundantly expressed in hemocytes.

The protein localises to the secreted. In terms of biological role, active against both Gram-positive and Gram-negative bacteria but is not cytotoxic towards human erythrocytes or protozoa. In Mytilus galloprovincialis (Mediterranean mussel), this protein is Defensin MGD-1 (FH3).